A 335-amino-acid chain; its full sequence is 2-acylglycerol O-acyltransferase 1 (335 aa).

Transmembrane regions (helical) follow at residues 24 to 44 (WVLSFLLLVQVCIGIMVMLVL) and 104 to 124 (YIFGFHPHGIFVPGAFGNFCT). An N-linked (GlcNAc...) asparagine glycan is attached at Asn180.

It belongs to the diacylglycerol acyltransferase family. As to expression, expressed at high level in kidney and stomach. Expressed at lower level in brown and white adipose tissue, uterus and liver. Not detected in small intestine.

Its subcellular location is the endoplasmic reticulum membrane. It catalyses the reaction a 2-acylglycerol + an acyl-CoA = a 1,2-diacylglycerol + CoA. It carries out the reaction 2-(9Z-octadecenoyl)-glycerol + butanoyl-CoA = 1-butanoyl-2-(9Z-octadecenoyl)-glycerol + CoA. The enzyme catalyses 2-(9Z-octadecenoyl)-glycerol + octanoyl-CoA = 1-octanoyl-2-(9Z-octadecenoyl)-glycerol + CoA. The catalysed reaction is 2-(9Z-octadecenoyl)-glycerol + dodecanoyl-CoA = 1-dodecanoyl-2-(9Z-octadecenoyl)-glycerol + CoA. It catalyses the reaction 2-(9Z-octadecenoyl)-glycerol + tetradecanoyl-CoA = 1-tetradecanoyl-2-(9Z-octadecenoyl)-glycerol + CoA. It carries out the reaction 2-(9Z-octadecenoyl)-glycerol + hexadecanoyl-CoA = 1-hexadecanoyl-2-(9Z-octadecenoyl)-glycerol + CoA. The enzyme catalyses 2-(9Z-octadecenoyl)-glycerol + octadecanoyl-CoA = 1-octadecanoyl-2-(9Z-octadecenoyl)-glycerol + CoA. The catalysed reaction is eicosanoyl-CoA + 2-(9Z-octadecenoyl)-glycerol = 1-eicosanoyl-2-(9Z-octadecenoyl)-glycerol + CoA. It catalyses the reaction 2-(9Z-octadecenoyl)-glycerol + (9Z)-octadecenoyl-CoA = 1,2-di-(9Z-octadecenoyl)-glycerol + CoA. It carries out the reaction 2-(9Z-octadecenoyl)-glycerol + (9Z,12Z)-octadecadienoyl-CoA = 1-(9Z,12Z-octadecadienoyl)-2-(9Z-octadecenoyl)-glycerol + CoA. The enzyme catalyses 2-(9Z-octadecenoyl)-glycerol + (5Z,8Z,11Z,14Z)-eicosatetraenoyl-CoA = 1-(5Z,8Z,11Z,14Z-eicosatetraenoyl)-2-(9Z-octadecenoyl)-glycerol + CoA. The catalysed reaction is a 2-acylglycerol + an acyl-CoA = a 1,2-diacyl-sn-glycerol + CoA. It catalyses the reaction a 2-acylglycerol + an acyl-CoA = a 2,3-diacyl-sn-glycerol + CoA. It carries out the reaction a 1-acylglycerol + an acyl-CoA = a 1,2-diacylglycerol + CoA. The enzyme catalyses 1-dodecanoylglycerol + (9Z)-octadecenoyl-CoA = 1-dodecanoyl-2-(9Z-octadecenoyl)-glycerol + CoA. The catalysed reaction is 1-tetradecanoylglycerol + (9Z)-octadecenoyl-CoA = 1-tetradecanoyl-2-(9Z-octadecenoyl)-glycerol + CoA. It catalyses the reaction 1-hexadecanoylglycerol + (9Z)-octadecenoyl-CoA = 1-hexadecanoyl-2-(9Z-octadecenoyl)-glycerol + CoA. It carries out the reaction 1-(9Z-octadecenoyl)-glycerol + (9Z)-octadecenoyl-CoA = 1,2-di-(9Z-octadecenoyl)-glycerol + CoA. The enzyme catalyses 1-(9Z,12Z-octadecadienoyl)-glycerol + (9Z)-octadecenoyl-CoA = 1-(9Z,12Z-octadecadienoyl)-2-(9Z-octadecenoyl)-glycerol + CoA. The catalysed reaction is 1-(9Z,12Z,15Z-octadecatrienoyl)-glycerol + (9Z)-octadecenoyl-CoA = 1-(9Z,12Z,15Z-octadecatrienoyl)-2-(9Z-octadecenoyl)-glycerol + CoA. It catalyses the reaction 1-(5Z,8Z,11Z,14Z-eicosatetraenoyl)-glycerol + (9Z)-octadecenoyl-CoA = 1-(5Z,8Z,11Z,14Z-eicosatetraenoyl)-2-(9Z-octadecenoyl)-glycerol + CoA. It carries out the reaction a 1-acylglycerol + an acyl-CoA = a 1,3-diacylglycerol + CoA. The enzyme catalyses 1-dodecanoylglycerol + (9Z)-octadecenoyl-CoA = 1-dodecanoyl-3-(9Z-octadecenoyl)-glycerol + CoA. The catalysed reaction is 1-hexadecanoylglycerol + (9Z)-octadecenoyl-CoA = 1-(9Z-octadecenoyl)-3-hexadecanoylglycerol + CoA. It catalyses the reaction 1-octadecanoylglycerol + (9Z)-octadecenoyl-CoA = 1-octadecanoyl-3-(9Z-octadecenoyl)-glycerol + CoA. It carries out the reaction 1-(9Z-octadecenoyl)-sn-glycerol + (9Z)-octadecenoyl-CoA = 1,3-di-(9Z-octadecenoyl)-glycerol + CoA. The enzyme catalyses 1-(9Z,12Z-octadecadienoyl)-glycerol + (9Z)-octadecenoyl-CoA = 1-(9Z-octadecenoyl)-3-(9Z,12Z-octadecadienoyl)-glycerol + CoA. The catalysed reaction is 1-(9Z,12Z,15Z-octadecatrienoyl)-glycerol + (9Z)-octadecenoyl-CoA = 1-(9Z,12Z,15Z-octadecatrienoyl)-3-(9Z-octadecenoyl)-glycerol + CoA. It catalyses the reaction a 1-acyl-sn-glycerol + an acyl-CoA = a 1,3-diacyl-sn-glycerol + CoA. It carries out the reaction a 3-acyl-sn-glycerol + an acyl-CoA = a 1,3-diacyl-sn-glycerol + CoA. The enzyme catalyses 3-octadecanoyl-sn-glycerol + (9Z)-octadecenoyl-CoA = 1-(9Z-octadecenoyl)-3-octadecanoyl-sn-glycerol + CoA. It functions in the pathway glycerolipid metabolism; triacylglycerol biosynthesis. Involved in glycerolipid synthesis and lipid metabolism. Catalyzes the formation of diacylglycerol, the precursor of triacylglycerol, by transferring the acyl chain of a fatty acyl-CoA to a monoacylglycerol, mainly at the sn-1 or sn-3 positions. It uses both sn-2-monoacylglycerol (2-acylglycerol) and sn-1-monoacylglycerol (1-acyl-sn-glycerol) equally well as substrates, and uses sn-3-monoacylglycerol (3-acyl-sn-glycerol) with lower efficiency. Probably not involved in absorption of dietary fat in the small intestine. This Mus musculus (Mouse) protein is 2-acylglycerol O-acyltransferase 1.